Here is a 368-residue protein sequence, read N- to C-terminus: (3S,6E)-nerolidol synthase (368 aa).

Positions 91, 228, and 232 each coordinate Mg(2+). A DDXXE motif motif is present at residues 91–95 (DDLLE).

The protein belongs to the terpene synthase family. Requires Mg(2+) as cofactor. Mn(2+) is required as a cofactor.

It carries out the reaction (2E,6E)-farnesyl diphosphate + H2O = (3S,6E)-nerolidol + diphosphate. The catalysed reaction is (2E)-geranyl diphosphate + H2O = (S)-linalool + diphosphate. Its pathway is secondary metabolite biosynthesis; terpenoid biosynthesis. Functionally, sesquiterpene synthase converting farnesyl diphosphate to nerolidol. Also has a monoterpene synthase activity, converting geranyl diphosphate into linalool as the major product. Has no diterpene synthase activity. The polypeptide is (3S,6E)-nerolidol synthase (Selaginella moellendorffii (Spikemoss)).